The chain runs to 85 residues: Large ribosomal subunit protein bL27 (85 aa).

The disordered stretch occupies residues 1-22; it reads MAHKKGQGSSRNGRDSPGQRRG.

It belongs to the bacterial ribosomal protein bL27 family.

This Anaeromyxobacter dehalogenans (strain 2CP-1 / ATCC BAA-258) protein is Large ribosomal subunit protein bL27.